A 552-amino-acid chain; its full sequence is MDIKRTVLWVIFFMSAVMLFDNWQRDHGRPSMFFPSATPTKTVGSAAPGTTTPGTQPADLPATNAAAPGNAPAATQSQLVKFNTDVYSGEIDTRGGTLSKLSLVNKGDGKQPDLVITLFDRTANHTYLARTGLLGGDFPNHNDIYTPLPNQQHDLTGDEKSFQLSFESPVKGGVKVIKTYTFTRGSYVIGVDTKIQNVGTAPVTPSVYMELVRDDQPVETPRFSHTFIGPAVYTDQHHFQKMTFGDIDKNKQDYATSADNGWIAMVQHYFASAWIPQQGVKRDIYVEKIDPALYRVGVKEPVPTIAPGQTVDVSARLFAGPEEERMLEGIAPGLELVKDYGWVTIIAKPLFWLLEKIHSYVGNWGWSIVLLTLLIKAVFFPLSAASYKSMARMKAITPRMQALRERFKGDPQKMNSALMELYKTEKVNPFGGCLPVVIQIPVFISLYWVLLSSVEMRGAPWILWIHDLSQQDPFFILPVLMAVSMFLQTKLNPTPPDPVQAKMMMFMPIAFSVMFFFFPAGLVLYYVVNNVLSIAQQYYITRMMGQTKAKAA.

A helical transmembrane segment spans residues 3 to 23; the sequence is IKRTVLWVIFFMSAVMLFDNW. Residues 35–59 form a disordered region; sequence PSATPTKTVGSAAPGTTTPGTQPAD. The span at 42 to 59 shows a compositional bias: low complexity; sequence TVGSAAPGTTTPGTQPAD. 3 helical membrane-spanning segments follow: residues 364–384, 430–450, and 504–524; these read WGWS…PLSA, FGGC…YWVL, and MMFM…GLVL.

It belongs to the OXA1/ALB3/YidC family. Type 1 subfamily. Interacts with the Sec translocase complex via SecD. Specifically interacts with transmembrane segments of nascent integral membrane proteins during membrane integration.

Its subcellular location is the cell inner membrane. Its function is as follows. Required for the insertion and/or proper folding and/or complex formation of integral membrane proteins into the membrane. Involved in integration of membrane proteins that insert both dependently and independently of the Sec translocase complex, as well as at least some lipoproteins. Aids folding of multispanning membrane proteins. The sequence is that of Membrane protein insertase YidC from Paraburkholderia phytofirmans (strain DSM 17436 / LMG 22146 / PsJN) (Burkholderia phytofirmans).